The primary structure comprises 677 residues: Secretogranin-1 (677 aa).

The signal sequence occupies residues 1-20; that stretch reads MQPTLLLSLLGAVGLAAVNS. A disulfide bridge links Cys36 with Cys57. Composition is skewed to basic and acidic residues over residues 64–100 and 118–136; these read SRKD…ESSS and ADTE…RADE. The interval 64-463 is disordered; the sequence is SRKDVKDKET…DKARRHPQGA (400 aa). Thr79 carries the post-translational modification Phosphothreonine. A phosphoserine mark is found at Ser93, Ser99, and Ser100. Ser93 carries an O-linked (Xyl...) (chondroitin sulfate) serine glycan. Residues 116 to 120 form an O-glycosylated at one site region; sequence TKADT. Ser130 carries the phosphoserine; by FAM20C modification. Position 149 is a phosphoserine (Ser149). Composition is skewed to basic and acidic residues over residues 150–162, 172–190, and 200–236; these read EEVK…KSQR, NYQK…HLEE, and NERK…EKSS. Ser183 is subject to Phosphoserine. Ser225 carries the phosphoserine; by FAM20C modification. A glycan (O-linked (Xyl...) (chondroitin sulfate) serine) is linked at Ser239. Phosphoserine is present on residues Ser259 and Ser263. The span at 262–272 shows a compositional bias: acidic residues; that stretch reads ESEEGEEDATS. Residues 277–287 are compositionally biased toward basic residues; the sequence is RRTRPRHHHGR. Phosphoserine occurs at positions 293, 294, 311, and 335. The residue at position 341 (Tyr341) is a Sulfotyrosine. The span at 359–372 shows a compositional bias: basic and acidic residues; that stretch reads WERYRGRGSEEYRA. Phosphoserine; by FAM20C is present on residues Ser367, Ser377, and Ser380. Composition is skewed to basic and acidic residues over residues 384–415 and 433–455; these read EDKR…EPGK and DTRE…QMDK. Tyr401 bears the Phosphotyrosine mark. A Phosphoserine modification is found at Ser405. Tyr474 is modified (sulfotyrosine). Positions 475-512 are disordered; that stretch reads GEEGAPGKWQQQGDLQDTKENREEARFQDKQYSSHHTA. Basic and acidic residues predominate over residues 490–503; that stretch reads QDTKENREEARFQD. 2 positions are modified to phosphoserine: Ser533 and Ser534. Position 566 is a sulfotyrosine (Tyr566). Residue Ser617 is modified to Phosphoserine. A disordered region spans residues 622 to 653; it reads DFYDSEEPVSTHQEAENEKDRADQTVLTEDEK. Tyr624 carries the post-translational modification Sulfotyrosine. Ser626 and Ser631 each carry phosphoserine. A compositionally biased stretch (basic and acidic residues) spans 634 to 653; that stretch reads QEAENEKDRADQTVLTEDEK.

The protein belongs to the chromogranin/secretogranin protein family. As to quaternary structure, interacts with ITPR1 in the secretory granules. Extensively processed by limited proteolysis at conserved basic residues. Alternative processing are seen in different tissues. Post-translationally, O-glycosylated. Detected in cerebrospinal fluid and urine (at protein level). Expressed in the adrenal medulla, and in pheochromocytoma. Not expressed in liver.

The protein resides in the secreted. Secretogranin-1 is a neuroendocrine secretory granule protein, which may be the precursor for other biologically active peptides. In Homo sapiens (Human), this protein is Secretogranin-1 (CHGB).